Here is a 150-residue protein sequence, read N- to C-terminus: Catabolic 3-dehydroquinase 2 (150 aa).

Catalysis depends on Y23, which acts as the Proton acceptor. Substrate contacts are provided by N74, H80, and D87. Catalysis depends on H100, which acts as the Proton donor. Substrate is bound by residues 101–102 (IT) and R111.

It belongs to the type-II 3-dehydroquinase family. In terms of assembly, homododecamer. Adopts a ring-like structure, composed of an arrangement of two hexameric rings stacked on top of one another.

It catalyses the reaction 3-dehydroquinate = 3-dehydroshikimate + H2O. The protein operates within aromatic compound metabolism; 3,4-dihydroxybenzoate biosynthesis; 3,4-dihydroxybenzoate from 3-dehydroquinate: step 1/2. Its function is as follows. Is involved in the catabolism of quinate. Allows the utilization of quinate as carbon source via the beta-ketoadipate pathway. This Neosartorya fischeri (strain ATCC 1020 / DSM 3700 / CBS 544.65 / FGSC A1164 / JCM 1740 / NRRL 181 / WB 181) (Aspergillus fischerianus) protein is Catabolic 3-dehydroquinase 2.